The sequence spans 483 residues: 6-phosphogluconate dehydrogenase, decarboxylating (483 aa).

NADP(+)-binding positions include 10–15 (GLAVMG) and 33–35 (NRT). The residue at position 38 (lysine 38) is an N6-acetyllysine. Serine 57 carries the post-translational modification Phosphoserine. NADP(+)-binding positions include 75-77 (VKA) and asparagine 103. Substrate is bound by residues asparagine 103, serine 129, and glycine 131. Serine 129 carries the phosphoserine modification. Catalysis depends on lysine 184, which acts as the Proton acceptor. A substrate-binding site is contributed by 187–188 (HN). Glutamate 191 acts as the Proton donor in catalysis. 5 residues coordinate substrate: tyrosine 192, lysine 261, arginine 288, arginine 447, and histidine 453. 478–481 (SSSY) contacts NADP(+).

Belongs to the 6-phosphogluconate dehydrogenase family. Homodimer.

It is found in the cytoplasm. The enzyme catalyses 6-phospho-D-gluconate + NADP(+) = D-ribulose 5-phosphate + CO2 + NADPH. The protein operates within carbohydrate degradation; pentose phosphate pathway; D-ribulose 5-phosphate from D-glucose 6-phosphate (oxidative stage): step 3/3. Its function is as follows. Catalyzes the oxidative decarboxylation of 6-phosphogluconate to ribulose 5-phosphate and CO(2), with concomitant reduction of NADP to NADPH. The chain is 6-phosphogluconate dehydrogenase, decarboxylating (PGD) from Ovis aries (Sheep).